Here is a 661-residue protein sequence, read N- to C-terminus: Immunoglobulin-like domain-containing receptor 2 (661 aa).

A signal peptide spans 1–35; sequence MPAFPTLDLDGKLGKMDRVVLGWTAVFWLTAMVEG. An Ig-like V-type domain is found at 36-177; that stretch reads LQVTVPDKKK…LEGKNEDSVE (142 aa). At 36–201 the chain is on the lumenal side; the sequence is LQVTVPDKKK…PSFAVEIMPE (166 aa). A disulfide bond links Cys-57 and Cys-160. A helical transmembrane segment spans residues 202–222; the sequence is WVFVGLVILGIFLFFVLVGIC. Topologically, residues 223–661 are cytoplasmic; the sequence is WCQCCPHSCC…DFPTRMSLVV (439 aa). Disordered stretches follow at residues 288–310, 410–429, and 453–661; these read LMDKPHPPPLAPSDSTGGSHSVR, EDRESFRHSQQRSKSEMLSR, and QRSR…SLVV. Basic and acidic residues-rich tracts occupy residues 410–428 and 463–478; these read EDRESFRHSQQRSKSEMLS and HEARAGSRFERSESRA. The residue at position 487 (Ser-487) is a Phosphoserine. Over residues 491 to 506 the composition is skewed to basic and acidic residues; that stretch reads YYGRGRSREPPGDGER. Arg-559 carries the post-translational modification Omega-N-methylarginine. Phosphoserine is present on Ser-594. The segment covering 595–607 has biased composition (acidic residues); that stretch reads EGEDEDDAADEDA. The segment covering 628-639 has biased composition (basic and acidic residues); the sequence is RGRDLSFHSNSE.

It belongs to the immunoglobulin superfamily. LISCH7 family. As to quaternary structure, interacts with MARVELD2 and OCLN. Interacts with P4HB and HSPA5; the interaction with HSPA5 stabilizes ILDR2 expression. Interacts (via C-terminus) with TRA2A, TRA2B and SRSF1. Expressed in epithelial tissues, mainly in liver, kidney and colon.

It is found in the endoplasmic reticulum membrane. The protein resides in the cell junction. It localises to the tight junction. Its subcellular location is the nucleus. May be involved in ER stress pathways with effects on lipid homeostasis and insulin secretion. With ILDR1 and LSR, involved in the maintain of the epithelial barrier function through the recruitment of MARVELD2/tricellulin to tricellular tight junctions. Also functions as a B7-like protein family member expressed on immune cells and inflamed tissue and with T-cell inhibitory activity. In the inner ear, may regulate alternative pre-mRNA splicing via binding to TRA2A, TRA2B and SRSF1. This Mus musculus (Mouse) protein is Immunoglobulin-like domain-containing receptor 2.